The chain runs to 948 residues: UvrABC system protein A (948 aa).

33–40 (GLSGSGKS) is an ATP binding site. Residues 252–279 (CPICGFSIGELEPRMFSFNSPFGACPTC) form a C4-type zinc finger. ABC transporter domains lie at 309–587 (WIPT…KKSL) and 607–935 (ASDR…KYLK). 639–646 (GVSGSGKS) serves as a coordination point for ATP. The C4-type zinc-finger motif lies at 738 to 764 (CEACKGDGIIKIEMHFLPDVYVPCEVC).

It belongs to the ABC transporter superfamily. UvrA family. As to quaternary structure, forms a heterotetramer with UvrB during the search for lesions.

The protein resides in the cytoplasm. The UvrABC repair system catalyzes the recognition and processing of DNA lesions. UvrA is an ATPase and a DNA-binding protein. A damage recognition complex composed of 2 UvrA and 2 UvrB subunits scans DNA for abnormalities. When the presence of a lesion has been verified by UvrB, the UvrA molecules dissociate. This is UvrABC system protein A from Staphylococcus aureus (strain N315).